The primary structure comprises 555 residues: T-complex protein 1 subunit gamma (555 aa).

The disordered stretch occupies residues 527–555 (KKKQAPGSGPSKPTIETEGDADNEQILPD).

This sequence belongs to the TCP-1 chaperonin family. Heterooligomeric complex of about 850 to 900 kDa that forms two stacked rings, 12 to 16 nm in diameter. Interacts with CCT8.

It is found in the cytoplasm. Functionally, molecular chaperone; assists the folding of proteins upon ATP hydrolysis. Known to play a role, in vitro, in the folding of actin and tubulin. In Arabidopsis thaliana (Mouse-ear cress), this protein is T-complex protein 1 subunit gamma.